A 375-amino-acid chain; its full sequence is All-trans-retinol dehydrogenase [NAD(+)] ADH1B (375 aa).

An N-acetylserine modification is found at serine 2. Serine 23 carries the post-translational modification Phosphoserine. At tyrosine 35 the chain carries Phosphotyrosine. The Zn(2+) site is built by cysteine 47, histidine 68, cysteine 98, cysteine 101, cysteine 104, cysteine 112, and cysteine 175. NAD(+) is bound by residues 200–205 (GLGGVG), aspartate 224, lysine 229, 293–295 (VGV), and arginine 370.

This sequence belongs to the zinc-containing alcohol dehydrogenase family. As to quaternary structure, homodimer or heterodimer of closely related subunits. Zn(2+) is required as a cofactor. Expressed in liver.

It is found in the cytoplasm. The catalysed reaction is all-trans-retinol + NAD(+) = all-trans-retinal + NADH + H(+). The enzyme catalyses all-trans-4-hydroxyretinol + NAD(+) = all-trans-4-hydroxyretinal + NADH + H(+). It catalyses the reaction all-trans-4-oxoretinol + NAD(+) = all-trans-4-oxoretinal + NADH + H(+). Functionally, catalyzes the NAD-dependent oxidation of all-trans-retinol and its derivatives such as all-trans-4-hydroxyretinol and may participate in retinoid metabolism. In vitro can also catalyze the NADH-dependent reduction of all-trans-retinal and its derivatives such as all-trans-4-oxoretinal. Catalyzes in the oxidative direction with higher efficiency. Has the same affinity for all-trans-4-hydroxyretinol and all-trans-4-oxoretinal. In Papio hamadryas (Hamadryas baboon), this protein is All-trans-retinol dehydrogenase [NAD(+)] ADH1B.